The sequence spans 451 residues: MQRHAIILAAGKGTRMKSKKYKVLHEVAGKPMVEHVLNNVKQAGVDQIVTIIGHGAESVKDTLGNQSLYSFQDKQLGTAHAVKMAHEHLADKEGTTLVVCGDTPLITYQTLQSLIEHHESTQSHVTVLSASTINPYGYGRIIRNHNGILERIVEEKDANDSERAIKEISSGIFAFNNRVLFEKLEQVKNDNAQGEYYLPDVLSLILKDGGKAEVYCTEDFDEIIGVNDRLMLSEAEKALQQRINRYHMENGVTIIDPSSTFIGTDVKIGIDTTIEPGVRIGGHTTIEEDVWIGQYSEINNSTIHSNANIKQSVINDSIVGENXXVGPFAQLRPGSNLGSEVKVGNFVEVKKADIKDGAKVSHLSYIGDAEIGERTNIGCGSITVNYDGANKFKTIVGKDAFIGCNTNLIAPVTVGNHTLIAAGSTITDNIPEDSLALARARQVNKEGYLKK.

A pyrophosphorylase region spans residues 1–229 (MQRHAIILAA…FDEIIGVNDR (229 aa)). UDP-N-acetyl-alpha-D-glucosamine-binding positions include 8–11 (LAAG), K22, Q72, and 77–78 (GT). D102 contributes to the Mg(2+) binding site. Residues G139, E154, and N227 each coordinate UDP-N-acetyl-alpha-D-glucosamine. N227 contacts Mg(2+). The segment at 230–250 (LMLSEAEKALQQRINRYHMEN) is linker. Residues 251-451 (GVTIIDPSST…QVNKEGYLKK (201 aa)) form an N-acetyltransferase region. Positions 332 and 350 each coordinate UDP-N-acetyl-alpha-D-glucosamine. Catalysis depends on H362, which acts as the Proton acceptor. The UDP-N-acetyl-alpha-D-glucosamine site is built by Y365 and N376. Residues 385-386 (NY), A422, and R439 contribute to the acetyl-CoA site.

In the N-terminal section; belongs to the N-acetylglucosamine-1-phosphate uridyltransferase family. This sequence in the C-terminal section; belongs to the transferase hexapeptide repeat family. In terms of assembly, homotrimer. Mg(2+) is required as a cofactor.

It localises to the cytoplasm. The catalysed reaction is alpha-D-glucosamine 1-phosphate + acetyl-CoA = N-acetyl-alpha-D-glucosamine 1-phosphate + CoA + H(+). The enzyme catalyses N-acetyl-alpha-D-glucosamine 1-phosphate + UTP + H(+) = UDP-N-acetyl-alpha-D-glucosamine + diphosphate. The protein operates within nucleotide-sugar biosynthesis; UDP-N-acetyl-alpha-D-glucosamine biosynthesis; N-acetyl-alpha-D-glucosamine 1-phosphate from alpha-D-glucosamine 6-phosphate (route II): step 2/2. It functions in the pathway nucleotide-sugar biosynthesis; UDP-N-acetyl-alpha-D-glucosamine biosynthesis; UDP-N-acetyl-alpha-D-glucosamine from N-acetyl-alpha-D-glucosamine 1-phosphate: step 1/1. It participates in bacterial outer membrane biogenesis; LPS lipid A biosynthesis. Catalyzes the last two sequential reactions in the de novo biosynthetic pathway for UDP-N-acetylglucosamine (UDP-GlcNAc). The C-terminal domain catalyzes the transfer of acetyl group from acetyl coenzyme A to glucosamine-1-phosphate (GlcN-1-P) to produce N-acetylglucosamine-1-phosphate (GlcNAc-1-P), which is converted into UDP-GlcNAc by the transfer of uridine 5-monophosphate (from uridine 5-triphosphate), a reaction catalyzed by the N-terminal domain. This chain is Bifunctional protein GlmU, found in Staphylococcus epidermidis.